The sequence spans 248 residues: 3-deoxy-manno-octulosonate cytidylyltransferase (248 aa).

It belongs to the KdsB family.

Its subcellular location is the cytoplasm. It carries out the reaction 3-deoxy-alpha-D-manno-oct-2-ulosonate + CTP = CMP-3-deoxy-beta-D-manno-octulosonate + diphosphate. It functions in the pathway nucleotide-sugar biosynthesis; CMP-3-deoxy-D-manno-octulosonate biosynthesis; CMP-3-deoxy-D-manno-octulosonate from 3-deoxy-D-manno-octulosonate and CTP: step 1/1. The protein operates within bacterial outer membrane biogenesis; lipopolysaccharide biosynthesis. Activates KDO (a required 8-carbon sugar) for incorporation into bacterial lipopolysaccharide in Gram-negative bacteria. The polypeptide is 3-deoxy-manno-octulosonate cytidylyltransferase (Desulfosudis oleivorans (strain DSM 6200 / JCM 39069 / Hxd3) (Desulfococcus oleovorans)).